Consider the following 1515-residue polypeptide: Apolipophorin (1515 aa).

In terms of domain architecture, VWFD spans 952–1118 (LRGVVVNGQH…NSYRLASSCP (167 aa)). Cys-976 and Cys-1117 are joined by a disulfide. N-linked (GlcNAc...) asparagine glycosylation is present at Asn-988.

As to expression, hemolymph.

The protein resides in the secreted. In terms of biological role, mediates transport for various types of lipids in hemolymph. Acts by forming lipoprotein particles that bind lipoproteins and lipids. Binds the A.niger cell wall component alpha-1,3-glucan, a fungal pathogen-associated molecular pattern (PAMP) that activates the host immune response. The sequence is that of Apolipophorin from Galleria mellonella (Greater wax moth).